An 807-amino-acid polypeptide reads, in one-letter code: Serine/threonine-protein kinase B-raf (807 aa).

2 stretches are compositionally biased toward low complexity: residues 1–15 (MAAL…GASL) and 110–128 (SVSS…SSSL). 2 disordered regions span residues 1 to 36 (MAAL…YAGS) and 104 to 128 (GNGT…SSSL). The 73-residue stretch at 155-227 (PIVRVFLPNK…TGEELHVEVL (73 aa)) folds into the RBD domain. A Phorbol-ester/DAG-type zinc finger spans residues 234–280 (THNFVRKTFFTLAFCDFCRKLLFQGFRCQTCGYKFHQRCSTEVPLMC). Residues His235, Cys248, Cys251, Cys261, Cys264, His269, Cys272, and Cys280 each coordinate Zn(2+). Positions 303–313 (EETTLGETTPA) are enriched in polar residues. Disordered regions lie at residues 303–372 (EETT…VHIN) and 434–494 (STAG…EIPD). Over residues 314–328 (SGSYPSVPPSDSVGP) the composition is skewed to low complexity. Basic and acidic residues-rich tracts occupy residues 348–363 (PADE…RDRS) and 463–487 (QRER…RDSS). In terms of domain architecture, Protein kinase spans 497 to 757 (ITVGQRIGSG…PQILASIELL (261 aa)). ATP is bound by residues 503-511 (IGSGSFGTV) and Lys523. The active-site Proton acceptor is the Asp616. Residue Ser790 is modified to Phosphoserine; by MAPK1. At Thr793 the chain carries Phosphothreonine; by MAPK1.

It belongs to the protein kinase superfamily. TKL Ser/Thr protein kinase family. RAF subfamily. Zn(2+) serves as cofactor. Phosphorylated. As to expression, expressed preferentially in neural tissue.

Its subcellular location is the nucleus. The protein resides in the cytoplasm. It is found in the cell membrane. It carries out the reaction L-seryl-[protein] + ATP = O-phospho-L-seryl-[protein] + ADP + H(+). The catalysed reaction is L-threonyl-[protein] + ATP = O-phospho-L-threonyl-[protein] + ADP + H(+). In quiescent cells, maintained in an inactive state via an intramolecular interaction between the protein kinase and N-terminal domains. Following mitogen-mediated cell activation, binds via its RGB domain to active HRAS (GTP-bound) which releases the inhibitory intramolecular interaction between the two domains. This allows the MAP2K1-mediated dimerization of KSR1 or KSR2, and BRAF which activates BRAF. Functionally, protein kinase involved in the activation of the MAP signaling cascade. May play a role in transducing specific signals in neural cells. This Coturnix japonica (Japanese quail) protein is Serine/threonine-protein kinase B-raf.